The sequence spans 466 residues: Aladin (466 aa).

WD repeat units lie at residues 135–174 (WLNS…TTAT), 179–218 (PSQT…HLGR), 229–269 (PNNL…MQPL), 271–310 (RLGP…TTER), and 378–418 (LVGG…FDLQ).

It localises to the nucleus. Its subcellular location is the nuclear pore complex. It is found in the cytoplasm. The protein resides in the cytoskeleton. The protein localises to the spindle. Involved in mitotic spindle assembly. The chain is Aladin from Drosophila melanogaster (Fruit fly).